Consider the following 158-residue polypeptide: MAPRGSQRTVNKIVAENRKARFNYEIIDTYEAGIMLTGTEVKSLREGKANIAESYASDEGEEIWLINSHLPEYLQANRFNHEPRRRRKLLLNKREINRLRVAINREGMTLVPLKIYFNEKGRAKLELALAKGKKLHDKRETEKERDWNRQKSRLLKTG.

The segment at 134-158 (KLHDKRETEKERDWNRQKSRLLKTG) is disordered. Basic and acidic residues predominate over residues 137–149 (DKRETEKERDWNR).

The protein belongs to the SmpB family.

It is found in the cytoplasm. Required for rescue of stalled ribosomes mediated by trans-translation. Binds to transfer-messenger RNA (tmRNA), required for stable association of tmRNA with ribosomes. tmRNA and SmpB together mimic tRNA shape, replacing the anticodon stem-loop with SmpB. tmRNA is encoded by the ssrA gene; the 2 termini fold to resemble tRNA(Ala) and it encodes a 'tag peptide', a short internal open reading frame. During trans-translation Ala-aminoacylated tmRNA acts like a tRNA, entering the A-site of stalled ribosomes, displacing the stalled mRNA. The ribosome then switches to translate the ORF on the tmRNA; the nascent peptide is terminated with the 'tag peptide' encoded by the tmRNA and targeted for degradation. The ribosome is freed to recommence translation, which seems to be the essential function of trans-translation. This is SsrA-binding protein from Allorhizobium ampelinum (strain ATCC BAA-846 / DSM 112012 / S4) (Agrobacterium vitis (strain S4)).